A 152-amino-acid chain; its full sequence is UPF0178 protein YaiI (152 aa).

This sequence belongs to the UPF0178 family.

The polypeptide is UPF0178 protein YaiI (Escherichia coli O17:K52:H18 (strain UMN026 / ExPEC)).